The sequence spans 782 residues: HHIP-like protein 1 (782 aa).

An N-terminal signal peptide occupies residues 1–19 (MARARAGALLALWVLGAAA). 4 cysteine pairs are disulfide-bonded: cysteine 181–cysteine 521, cysteine 185–cysteine 528, cysteine 399–cysteine 417, and cysteine 484–cysteine 584. The N-linked (GlcNAc...) asparagine glycan is linked to asparagine 234. The interval 604–666 (EKFIPKTRST…RRGRLNSASR (63 aa)) is disordered. Over residues 610-623 (TRSTPRPTARAPTR) the composition is skewed to low complexity. Pro residues predominate over residues 632 to 642 (AAPPAPTPRPA). The SRCR domain occupies 673–776 (VRLVRPAGLS…HDEDAGVVCS (104 aa)). 3 disulfides stabilise this stretch: cysteine 700–cysteine 765, cysteine 713–cysteine 775, and cysteine 745–cysteine 755.

The protein belongs to the HHIP family.

The protein localises to the secreted. The polypeptide is HHIP-like protein 1 (HHIPL1) (Homo sapiens (Human)).